The following is a 167-amino-acid chain: NAD(P)H-quinone oxidoreductase subunit I, chloroplastic (167 aa).

4Fe-4S ferredoxin-type domains are found at residues 55-84 (GRIHFEFDKCIACEVCVRVCPIDLPVVDWK) and 95-124 (LNYSIDFGICIFCGNCVEYCPTNCLSMTEE). [4Fe-4S] cluster-binding residues include cysteine 64, cysteine 67, cysteine 70, cysteine 74, cysteine 104, cysteine 107, cysteine 110, and cysteine 114.

It belongs to the complex I 23 kDa subunit family. As to quaternary structure, NDH is composed of at least 16 different subunits, 5 of which are encoded in the nucleus. The cofactor is [4Fe-4S] cluster.

Its subcellular location is the plastid. The protein localises to the chloroplast thylakoid membrane. It carries out the reaction a plastoquinone + NADH + (n+1) H(+)(in) = a plastoquinol + NAD(+) + n H(+)(out). The catalysed reaction is a plastoquinone + NADPH + (n+1) H(+)(in) = a plastoquinol + NADP(+) + n H(+)(out). NDH shuttles electrons from NAD(P)H:plastoquinone, via FMN and iron-sulfur (Fe-S) centers, to quinones in the photosynthetic chain and possibly in a chloroplast respiratory chain. The immediate electron acceptor for the enzyme in this species is believed to be plastoquinone. Couples the redox reaction to proton translocation, and thus conserves the redox energy in a proton gradient. In Barbarea verna (Land cress), this protein is NAD(P)H-quinone oxidoreductase subunit I, chloroplastic.